The following is a 506-amino-acid chain: Ribose import ATP-binding protein RbsA 2 (506 aa).

ABC transporter domains lie at 5 to 241 and 251 to 498; these read LRLS…VGRR and VRAA…TAGT. 37-44 is a binding site for ATP; it reads GENGAGKS.

This sequence belongs to the ABC transporter superfamily. Ribose importer (TC 3.A.1.2.1) family. In terms of assembly, the complex is composed of an ATP-binding protein (RbsA), two transmembrane proteins (RbsC) and a solute-binding protein (RbsB).

It localises to the cell inner membrane. The catalysed reaction is D-ribose(out) + ATP + H2O = D-ribose(in) + ADP + phosphate + H(+). Its function is as follows. Part of the ABC transporter complex RbsABC involved in ribose import. Responsible for energy coupling to the transport system. This is Ribose import ATP-binding protein RbsA 2 from Burkholderia ambifaria (strain ATCC BAA-244 / DSM 16087 / CCUG 44356 / LMG 19182 / AMMD) (Burkholderia cepacia (strain AMMD)).